The primary structure comprises 214 residues: Large ribosomal subunit protein uL4 (214 aa).

The segment at 43-83 (RRQAGTHKAKSRSEVNRTTKKSIKQKGSGGARHGSRNAPIF) is disordered.

This sequence belongs to the universal ribosomal protein uL4 family. In terms of assembly, part of the 50S ribosomal subunit.

In terms of biological role, one of the primary rRNA binding proteins, this protein initially binds near the 5'-end of the 23S rRNA. It is important during the early stages of 50S assembly. It makes multiple contacts with different domains of the 23S rRNA in the assembled 50S subunit and ribosome. Functionally, forms part of the polypeptide exit tunnel. This Hyphomonas neptunium (strain ATCC 15444) protein is Large ribosomal subunit protein uL4.